Consider the following 497-residue polypeptide: Delayed-rectifier potassium channel regulatory subunit KCNS1 (497 aa).

Residues 1–186 lie on the Cytoplasmic side of the membrane; it reads MVSEFPGPGS…LTMENPGYSL (186 aa). Residues 187–208 form a helical membrane-spanning segment; the sequence is PSKLFSCVSIGVVLASIAAMCI. The Extracellular portion of the chain corresponds to 209–239; that stretch reads HSLPEYQAREAAAAVAAVAAGRSAEDVRDDP. A helical membrane pass occupies residues 240–262; the sequence is VLRRLEYFCIAWFSFEVSSRLLL. Topologically, residues 263–273 are cytoplasmic; the sequence is APSTRNFFCHP. Residues 274–291 traverse the membrane as a helical segment; it reads LNLIDIVSVLPFYLTLLA. At 292-309 the chain is on the extracellular side; sequence GAALGDRRGASGEELGDL. Residues 310-330 traverse the membrane as a helical; Voltage-sensor segment; that stretch reads GKVVQVFRLMRIFRVLKLARH. The Cytoplasmic segment spans residues 331–345; that stretch reads STGLRSLGATLKHSY. The chain crosses the membrane as a helical span at residues 346 to 367; the sequence is REVGILLLYLAVGVSVFSGVAY. Residues 368 to 379 lie on the Extracellular side of the membrane; the sequence is TAEEKNVGFDTI. An intramembrane region (helical) is located at residues 380-391; the sequence is PACWWWGTVSMT. The short motif at 392-397 is the Selectivity filter element; sequence TVGYGD. Residues 392 to 399 lie within the membrane without spanning it; sequence TVGYGDVV. The Extracellular segment spans residues 400-406; sequence PETVAGK. A helical membrane pass occupies residues 407-435; it reads LAASGCILGGILVVALPITIIFNKFSHFY. Residues 436–497 lie on the Cytoplasmic side of the membrane; the sequence is RRQKALEAAV…PSEPAKSHSY (62 aa). Positions 464–497 are disordered; sequence SDVSLETSRETSQEGRSTDLETQAPSEPAKSHSY. The segment covering 470–482 has biased composition (basic and acidic residues); that stretch reads TSRETSQEGRSTD.

This sequence belongs to the potassium channel family. S (TC 1.A.1.2) subfamily. Kv9.1/KCNS1 sub-subfamily. In terms of assembly, heterotetramer with KCNB1. Heterotetramer with KCNB2. Does not form homomultimers. As to expression, highly expressed in brain, but not in the other tissues tested.

Its subcellular location is the cell membrane. In terms of biological role, potassium channel regulatory subunit that modulate the delayed rectifier voltage-gated potassium channel activity of KCNB1 and KCNB2 by altering their kinetics, expression levels, and shifting the half-inactivation potential to more polarized values. While it does not form functional channels on its own, it can form functional heterotetrameric channels with KCNB1 and KCNB2. Each regulatory subunit has unique regulatory properties that can lead to extensive inhibition, significant changes in kinetics, and/or substantial shifts in the voltage dependencies of the inactivation process. The chain is Delayed-rectifier potassium channel regulatory subunit KCNS1 from Rattus norvegicus (Rat).